Here is a 415-residue protein sequence, read N- to C-terminus: Gamma-glutamyl phosphate reductase (415 aa).

It belongs to the gamma-glutamyl phosphate reductase family.

Its subcellular location is the cytoplasm. It carries out the reaction L-glutamate 5-semialdehyde + phosphate + NADP(+) = L-glutamyl 5-phosphate + NADPH + H(+). It functions in the pathway amino-acid biosynthesis; L-proline biosynthesis; L-glutamate 5-semialdehyde from L-glutamate: step 2/2. In terms of biological role, catalyzes the NADPH-dependent reduction of L-glutamate 5-phosphate into L-glutamate 5-semialdehyde and phosphate. The product spontaneously undergoes cyclization to form 1-pyrroline-5-carboxylate. The protein is Gamma-glutamyl phosphate reductase of Listeria monocytogenes serovar 1/2a (strain ATCC BAA-679 / EGD-e).